The sequence spans 92 residues: Progonadoliberin-1 (92 aa).

Positions 1 to 23 are cleaved as a signal peptide; sequence METIPKLMAAVVLLTVCLEGCSS. Q24 carries the pyrrolidone carboxylic acid modification. G33 bears the Glycine amide mark.

The protein belongs to the GnRH family. In terms of processing, the precursor is cleaved by ACE, which removes the Gly-Lys-Arg peptide at the C-terminus, leading to mature hormone. The mature form of Gonadoliberin-1 is also cleaved and degraded by ACE. As to expression, central nervous system.

The protein localises to the secreted. Its function is as follows. Stimulates the secretion of gonadotropins; it stimulates the secretion of both luteinizing and follicle-stimulating hormones. This Rattus norvegicus (Rat) protein is Progonadoliberin-1 (Gnrh1).